Here is a 116-residue protein sequence, read N- to C-terminus: NADH-ubiquinone oxidoreductase chain 3 (116 aa).

The next 3 helical transmembrane spans lie at 3–23 (LITTIITITITLSAVLATVSF), 56–76 (FFLIAILFLLFDLEIALLLPL), and 87–107 (LTLVWSTAVLALLTLGLIYEW).

Belongs to the complex I subunit 3 family.

It localises to the mitochondrion membrane. The enzyme catalyses a ubiquinone + NADH + 5 H(+)(in) = a ubiquinol + NAD(+) + 4 H(+)(out). In terms of biological role, core subunit of the mitochondrial membrane respiratory chain NADH dehydrogenase (Complex I) that is believed to belong to the minimal assembly required for catalysis. Complex I functions in the transfer of electrons from NADH to the respiratory chain. The immediate electron acceptor for the enzyme is believed to be ubiquinone. The protein is NADH-ubiquinone oxidoreductase chain 3 (MT-ND3) of Oncorhynchus kisutch (Coho salmon).